We begin with the raw amino-acid sequence, 203 residues long: Outer-membrane lipoprotein carrier protein (203 aa).

The first 21 residues, 1–21 (MKKLLVACCLLSGLISAHALA), serve as a signal peptide directing secretion.

Belongs to the LolA family. As to quaternary structure, monomer.

Its subcellular location is the periplasm. Participates in the translocation of lipoproteins from the inner membrane to the outer membrane. Only forms a complex with a lipoprotein if the residue after the N-terminal Cys is not an aspartate (The Asp acts as a targeting signal to indicate that the lipoprotein should stay in the inner membrane). The sequence is that of Outer-membrane lipoprotein carrier protein from Yersinia enterocolitica serotype O:8 / biotype 1B (strain NCTC 13174 / 8081).